A 159-amino-acid polypeptide reads, in one-letter code: Growth arrest and DNA damage-inducible protein GADD45 gamma (159 aa).

The tract at residues 43–86 (VYESAKVLNVDPDNVTFCVLAADEEDEGDIALQIHFTLIQAFCC) is homodimerization.

This sequence belongs to the GADD45 family. As to quaternary structure, undergoes concentration-dependent homodimerization, which is required for growth inhibititory activity and enhances interaction with PCNA. Interacts with GADD45GIP1. Interacts with PCNA.

In terms of biological role, involved in the regulation of growth and apoptosis. Mediates activation of stress-responsive MTK1/MEKK4 MAPKKK. The sequence is that of Growth arrest and DNA damage-inducible protein GADD45 gamma (Gadd45g) from Mus musculus (Mouse).